Reading from the N-terminus, the 307-residue chain is MRNRGFGRRELLVAMAMLVSVTGCARHASGARPASTTLPAGADLADRFAELERRYDARLGVYVPATGTTAAIEYRADERFAFCSTFKAPLVAAVLHQNPLTHLDKLITYTSDDIRSISPVAQQHVQTGMTIGQLCDAAIRYSDGTAANLLLADLGGPGGGTAAFTGYLRSLGDTVSRLDAEEPELNRDPPGDERDTTTPHAIALVLQQLVLGNALPPDKRALLTDWMARNTTGAKRIRAGFPADWKVIDKTGTGDYGRANDIAVVWSPTGVPYVVAVMSDRAGGGYDAEPREALLAEAATCVAGVLA.

The tat-type signal signal peptide spans Met1–Ala34. The Acyl-ester intermediate role is filled by Ser84. Residue Ser142 coordinates substrate. Residue Glu182 is the Proton acceptor of the active site. Thr251–Thr253 serves as a coordination point for substrate.

This sequence belongs to the class-A beta-lactamase family. Monomer. In terms of processing, exported by the Tat system. The position of the signal peptide cleavage has not been experimentally proven.

It is found in the periplasm. Its subcellular location is the secreted. It catalyses the reaction a beta-lactam + H2O = a substituted beta-amino acid. With respect to regulation, is inhibited by clavulanate. In terms of biological role, extended spectrum beta-lactamase (ESBL) that inactivates beta-lactam antibiotics by hydrolyzing the amide group of the beta-lactam ring. Displays high levels of penicillinase and cephalosporinase activity as well as measurable activity with carbapenems, including imipenem and meropenem. Plays a primary role in the intrinsic resistance of mycobacteria to beta-lactam antibiotics. In Mycobacterium bovis (strain ATCC BAA-935 / AF2122/97), this protein is Beta-lactamase (blaC).